Consider the following 215-residue polypeptide: Adenylate kinase (215 aa).

Residue glycine 10–threonine 15 participates in ATP binding. An NMP region spans residues serine 30–valine 59. AMP-binding positions include threonine 31, arginine 36, leucine 57–valine 59, glycine 85–arginine 88, and glutamine 92. Residues glycine 126 to aspartate 163 are LID. Residue arginine 127 participates in ATP binding. Residues cysteine 130 and cysteine 133 each coordinate Zn(2+). Position 136 to 137 (serine 136 to tyrosine 137) interacts with ATP. Residues cysteine 150 and cysteine 153 each contribute to the Zn(2+) site. Positions 160 and 171 each coordinate AMP. Residue glutamine 199 participates in ATP binding.

This sequence belongs to the adenylate kinase family. In terms of assembly, monomer.

It localises to the cytoplasm. It catalyses the reaction AMP + ATP = 2 ADP. It functions in the pathway purine metabolism; AMP biosynthesis via salvage pathway; AMP from ADP: step 1/1. Catalyzes the reversible transfer of the terminal phosphate group between ATP and AMP. Plays an important role in cellular energy homeostasis and in adenine nucleotide metabolism. The sequence is that of Adenylate kinase from Clostridium acetobutylicum (strain ATCC 824 / DSM 792 / JCM 1419 / IAM 19013 / LMG 5710 / NBRC 13948 / NRRL B-527 / VKM B-1787 / 2291 / W).